Here is a 229-residue protein sequence, read N- to C-terminus: ACD11 homolog protein (229 aa).

The an N-acylsphingoid base 1-phosphate site is built by E84, K88, R123, R127, and H166.

The protein belongs to the GLTP family.

In Arabidopsis thaliana (Mouse-ear cress), this protein is ACD11 homolog protein.